Here is a 458-residue protein sequence, read N- to C-terminus: ATP synthase subunit beta (458 aa).

Position 148-155 (G148–T155) interacts with ATP.

It belongs to the ATPase alpha/beta chains family. In terms of assembly, F-type ATPases have 2 components, CF(1) - the catalytic core - and CF(0) - the membrane proton channel. CF(1) has five subunits: alpha(3), beta(3), gamma(1), delta(1), epsilon(1). CF(0) has three main subunits: a(1), b(2) and c(9-12). The alpha and beta chains form an alternating ring which encloses part of the gamma chain. CF(1) is attached to CF(0) by a central stalk formed by the gamma and epsilon chains, while a peripheral stalk is formed by the delta and b chains.

Its subcellular location is the cell inner membrane. It catalyses the reaction ATP + H2O + 4 H(+)(in) = ADP + phosphate + 5 H(+)(out). Its function is as follows. Produces ATP from ADP in the presence of a proton gradient across the membrane. The catalytic sites are hosted primarily by the beta subunits. This is ATP synthase subunit beta from Shewanella piezotolerans (strain WP3 / JCM 13877).